A 1358-amino-acid polypeptide reads, in one-letter code: Xanthine dehydrogenase/oxidase (1358 aa).

In terms of domain architecture, 2Fe-2S ferredoxin-type spans 8–95 (DELVFFVNGK…HVAVTTVEGI (88 aa)). [2Fe-2S] cluster-binding residues include Cys-47, Cys-52, Cys-55, Cys-77, Cys-117, Cys-120, Cys-152, and Cys-154. In terms of domain architecture, FAD-binding PCMH-type spans 255-440 (FKGERVMWIQ…LSVEIPYSKE (186 aa)). FAD is bound by residues 283–290 (LVVGNTEV), Phe-363, 373–377 (ALGGN), Asp-386, Leu-430, and Lys-448. Residues Gln-796 and Phe-827 each contribute to the Mo-molybdopterin site. Positions 831 and 909 each coordinate substrate. Arg-941 is a binding site for Mo-molybdopterin. Substrate is bound by residues Phe-943 and Thr-1039. Ala-1108 is a binding site for Mo-molybdopterin. Catalysis depends on Glu-1290, which acts as the Proton acceptor.

It belongs to the xanthine dehydrogenase family. As to quaternary structure, homodimer. FAD serves as cofactor. Requires Mo-molybdopterin as cofactor. It depends on [2Fe-2S] cluster as a cofactor. As to expression, detected in liver (at protein level).

Its subcellular location is the peroxisome. The protein resides in the cytoplasm. It carries out the reaction xanthine + NAD(+) + H2O = urate + NADH + H(+). The catalysed reaction is hypoxanthine + NAD(+) + H2O = xanthine + NADH + H(+). It catalyses the reaction xanthine + O2 + H2O = urate + H2O2. Functionally, key enzyme in purine degradation. Catalyzes the oxidation of hypoxanthine to xanthine. Catalyzes the oxidation of xanthine to uric acid. Contributes to the generation of reactive oxygen species. This Gallus gallus (Chicken) protein is Xanthine dehydrogenase/oxidase (XDH).